Consider the following 461-residue polypeptide: Trimethylamine monooxygenase (461 aa).

Residues Ser-14, Glu-39, Lys-40, Gln-41, Met-47, Trp-48, and His-64 each coordinate FAD. Trp-72 and Asn-74 together coordinate NADP(+). FAD contacts are provided by Asn-74 and Ala-127. NADP(+)-binding residues include Ser-206, Ser-207, Ser-209, Arg-230, and Thr-231. Gln-319 and Thr-322 together coordinate FAD. Residue Arg-413 coordinates NADP(+).

This sequence belongs to the FMO family. The cofactor is FAD.

The catalysed reaction is trimethylamine + NADPH + O2 = trimethylamine N-oxide + NADP(+) + H2O. In terms of biological role, catalyzes the oxidation of trimethylamine (TMA) to produce trimethylamine N-oxide (TMAO). The produced TMAO is accumulated in the cell, functioning as a piezolyte, improving both growth and survival at high hydrostatic pressure (HHP). This chain is Trimethylamine monooxygenase, found in Myroides profundi.